The sequence spans 338 residues: Lipoate-protein ligase A (338 aa).

One can recognise a BPL/LPL catalytic domain in the interval 29–216 (PATQRVLFLW…AFFAHYGERV (188 aa)). ATP contacts are provided by residues Arg-71, 76 to 79 (GAVF), and Lys-134. Lys-134 serves as a coordination point for (R)-lipoate.

The protein belongs to the LplA family. Monomer.

Its subcellular location is the cytoplasm. The enzyme catalyses L-lysyl-[lipoyl-carrier protein] + (R)-lipoate + ATP = N(6)-[(R)-lipoyl]-L-lysyl-[lipoyl-carrier protein] + AMP + diphosphate + H(+). The protein operates within protein modification; protein lipoylation via exogenous pathway; protein N(6)-(lipoyl)lysine from lipoate: step 1/2. It functions in the pathway protein modification; protein lipoylation via exogenous pathway; protein N(6)-(lipoyl)lysine from lipoate: step 2/2. Catalyzes both the ATP-dependent activation of exogenously supplied lipoate to lipoyl-AMP and the transfer of the activated lipoyl onto the lipoyl domains of lipoate-dependent enzymes. This chain is Lipoate-protein ligase A, found in Salmonella paratyphi C (strain RKS4594).